We begin with the raw amino-acid sequence, 209 residues long: Auxin-binding protein ABP19b (209 aa).

The N-terminal stretch at 1-18 (MIFPIFFTFFLLLSTSHA) is a signal peptide. An intrachain disulfide couples C24 to C39. In terms of domain architecture, Cupin type-1 spans 53-199 (SGLGIAGNTT…TTLLDAPQIK (147 aa)). N60 carries N-linked (GlcNAc...) asparagine glycosylation. 4 residues coordinate Mn(2+): H101, H103, E108, and H147.

It belongs to the germin family. As to quaternary structure, interacts with ABP20.

The protein localises to the secreted. It localises to the extracellular space. It is found in the apoplast. Its subcellular location is the cell wall. In terms of biological role, probable receptor for the plant growth-promoting hormone auxin. In Prunus persica (Peach), this protein is Auxin-binding protein ABP19b (ABP19B).